The chain runs to 590 residues: Protein NRT1/ PTR FAMILY 8.5 (590 aa).

A helical membrane pass occupies residues 96 to 116 (ASDVMIWQGTCYITPLIGAVI). Phosphothreonine is present on threonine 126. 10 consecutive transmembrane segments (helical) span residues 130–150 (FSAI…LPVL), 168–188 (TVQY…TGGI), 214–234 (FFNW…TLLV), 242–262 (WGLG…SFFI), 365–385 (FPIW…STLF), 401–421 (IPPA…IPIY), 445–465 (MGIG…VETV), 478–498 (IFWQ…FFIG), 524–544 (AVGS…TALG), and 562–582 (FFWL…LICV).

The protein belongs to the major facilitator superfamily. Proton-dependent oligopeptide transporter (POT/PTR) (TC 2.A.17) family. In terms of tissue distribution, expressed in shoots, roots, stems, leaves, flowers and siliques.

The protein localises to the membrane. This chain is Protein NRT1/ PTR FAMILY 8.5 (NPF8.5), found in Arabidopsis thaliana (Mouse-ear cress).